The following is a 242-amino-acid chain: Beta-carotene ketolase (242 aa).

The enzyme catalyses all-trans-beta-carotene + 2 AH2 + 2 O2 = echinenone + 2 A + 3 H2O. The catalysed reaction is echinenone + 2 AH2 + 2 O2 = canthaxanthin + 2 A + 3 H2O. The protein operates within carotenoid biosynthesis; astaxanthin biosynthesis. Functionally, converts beta-carotene to canthaxanthin via echinenone. The sequence is that of Beta-carotene ketolase from Paracoccus sp. (strain PC1) (Alcaligenes sp. (strain PC1)).